The primary structure comprises 156 residues: Small ribosomal subunit protein uS7 (156 aa).

It belongs to the universal ribosomal protein uS7 family. Part of the 30S ribosomal subunit. Contacts proteins S9 and S11.

One of the primary rRNA binding proteins, it binds directly to 16S rRNA where it nucleates assembly of the head domain of the 30S subunit. Is located at the subunit interface close to the decoding center, probably blocks exit of the E-site tRNA. This chain is Small ribosomal subunit protein uS7, found in Clostridium botulinum (strain Alaska E43 / Type E3).